The following is a 355-amino-acid chain: Methyltransferase FUS9 (355 aa).

S-adenosyl-L-homocysteine contacts are provided by Y18, N63, D86, S123, and F124. Residue F231 participates in Mg(2+) binding.

This sequence belongs to the methyltransferase superfamily. Type-7 methyltransferase family. Mg(2+) is required as a cofactor.

It functions in the pathway mycotoxin biosynthesis. In terms of biological role, methyltransferase; part of the gene cluster that mediates the biosynthesis of the mycotoxin fusarin C. Within the cluster, FUS1, FUS2, FUS8 and FUS9 are sufficient for fusarin production. The roles of the other FUS members are yet undetermined. The fusarin C synthetase FUS1 is responsible for the condensation of one acetyl-coenzyme A (CoA) unit with six malonyl-CoA units and the amide linkage of the arising heptaketide and homoserine, subsequently releasing the first intermediate, prefusarin, as an alcohol with an open ring structure. The cytochrome P450 monooxygenase FUS8 participates in multiple oxidation processes at carbon C-20 and is able to use the FUS1 product as substrate, resulting in formation of 20-hydroxy-prefusarin. This reaction seems to be essential before the 2-pyrrolidone ring closure can be catalyzed by FUS2, generating 20-hydroxy-fusarin. FUS8 is able to further oxidizes carbon C-20 after ring closure, resulting in the formation of carboxy-fusarin C. As the last step, FUS9 methylates the hydroxyl group at C-21 to generate fusarin C. Fusarin C can then rearrange to epi-fusarin C, the (z)-isomers, and fusarin A and fusarin D. This chain is Methyltransferase FUS9, found in Gibberella moniliformis (strain M3125 / FGSC 7600) (Maize ear and stalk rot fungus).